An 86-amino-acid polypeptide reads, in one-letter code: Putative pro-MCH-like protein 2 (86 aa).

Residues 31–49 (GSVAFPAENGVQDTESTLE) are NGE-like. Residues 40 to 60 (GVQDTESTLEKRETGDEENSA) form a disordered region. Residues 52–64 (ETGDEENSAKFPI) are NEI-like. Residues 68 to 86 (DFDTLRCMLGRVYQRCWQV) are melanin-concentrating hormone-like.

Belongs to the melanin-concentrating hormone family. In terms of tissue distribution, expressed in testis but not in brain.

This Homo sapiens (Human) protein is Putative pro-MCH-like protein 2 (PMCHL2).